Here is a 307-residue protein sequence, read N- to C-terminus: MGQKLGVDSRQKIRQVLGSSSKVQKHDVESIGGGGGEIVPGHSPFDDLPEDCISNIISFTSPRDVCVSASVSKSFAHAVQCDSIWEKFLPSEYESLIPPWRVFSSKKDLYFTLCYDPVLVEDGKKSFWLETASGKKCVLLAAKELWITGGNNPEYWQWIELCESSFEKVPELLNNRSFQMGGSMSTQILSLGTHYSVYIVYKIKDERHGLRDLPIQVGVGFKGQEMPKQFICFDESTDKTKEWPKKKLMKSKKRGDGWMEAEIGDFFNDGGLMGFDEVEVSIVDVTSPNLKCGVMIEGIEFRPKDCQ.

The 47-residue stretch at 42 to 88 (HSPFDDLPEDCISNIISFTSPRDVCVSASVSKSFAHAVQCDSIWEKF) folds into the F-box domain.

The polypeptide is Putative F-box protein PP2-B6 (PP2B6) (Arabidopsis thaliana (Mouse-ear cress)).